The following is a 514-amino-acid chain: Glutathione-binding protein GsiB (514 aa).

A signal peptide spans 1–26 (MARAVHRSGLVALGIATALMASCAFA).

Belongs to the bacterial solute-binding protein 5 family. As to quaternary structure, the complex is composed of two ATP-binding proteins (GsiA), two transmembrane proteins (GsiC and GsiD) and a solute-binding protein (GsiB).

The protein resides in the periplasm. Functionally, part of the ABC transporter complex GsiABCD involved in glutathione import. Binds glutathione. The protein is Glutathione-binding protein GsiB of Shigella flexneri serotype 5b (strain 8401).